The chain runs to 256 residues: Gramicidin S biosynthesis protein GrsT (256 aa).

Serine 95 is a catalytic residue.

This sequence belongs to the thioesterase family.

The protein operates within antibiotic biosynthesis; gramicidin S biosynthesis. In terms of biological role, probable thioesterase involved in the biosynthesis of gramicidin S. This Aneurinibacillus migulanus (Bacillus migulanus) protein is Gramicidin S biosynthesis protein GrsT (grsT).